A 297-amino-acid chain; its full sequence is Polyamine aminopropyltransferase 2 (297 aa).

Positions 26 to 258 (FYWEPDVEGG…DLWTFFVALK (233 aa)) constitute a PABS domain. Q53 serves as a coordination point for S-methyl-5'-thioadenosine. Spermidine contacts are provided by H84 and E108. S-methyl-5'-thioadenosine contacts are provided by residues D128 and 157–158 (DV). Catalysis depends on D176, which acts as the Proton acceptor. An S-methyl-5'-thioadenosine-binding site is contributed by P184.

Belongs to the spermidine/spermine synthase family. Homodimer or homotetramer.

It localises to the cytoplasm. The enzyme catalyses S-adenosyl 3-(methylsulfanyl)propylamine + putrescine = S-methyl-5'-thioadenosine + spermidine + H(+). It functions in the pathway amine and polyamine biosynthesis; spermidine biosynthesis; spermidine from putrescine: step 1/1. Catalyzes the irreversible transfer of a propylamine group from the amino donor S-adenosylmethioninamine (decarboxy-AdoMet) to putrescine (1,4-diaminobutane) to yield spermidine. In Caldanaerobacter subterraneus subsp. tengcongensis (strain DSM 15242 / JCM 11007 / NBRC 100824 / MB4) (Thermoanaerobacter tengcongensis), this protein is Polyamine aminopropyltransferase 2.